We begin with the raw amino-acid sequence, 149 residues long: Calmodulin (149 aa).

Ala2 is modified (N-acetylalanine). EF-hand domains lie at 8 to 43, 44 to 79, 81 to 116, and 117 to 149; these read EQIA…LGQN, PTEA…KMKD, DSEE…LGEK, and LTDE…MMAK. The Ca(2+) site is built by Asp21, Asp23, Asp25, Cys27, Glu32, Asp57, Asp59, Asn61, Thr63, Glu68, Asp94, Asp96, Asn98, and Glu105. Lys116 carries the post-translational modification N6,N6,N6-trimethyllysine. Ca(2+) contacts are provided by Asp130, Asp132, Asp134, Gln136, and Glu141.

Belongs to the calmodulin family.

Functionally, calmodulin mediates the control of a large number of enzymes, ion channels and other proteins by Ca(2+). Among the enzymes to be stimulated by the calmodulin-Ca(2+) complex are a number of protein kinases and phosphatases. This chain is Calmodulin (CALM1), found in Zea mays (Maize).